Reading from the N-terminus, the 1099-residue chain is Sodium/potassium/calcium exchanger 1 (1099 aa).

Residues 1 to 452 (MGKLIRMGPQ…DLFSVEERRQ (452 aa)) lie on the Extracellular side of the membrane. Residues 123–134 (PTTTKNNYSPTA) are compositionally biased toward polar residues. Disordered stretches follow at residues 123 to 150 (PTTT…SSRT), 169 to 199 (TPRG…RVGT), and 284 to 304 (PRRV…KSNP). A glycan (N-linked (GlcNAc...) asparagine) is linked at asparagine 290. The chain crosses the membrane as a helical span at residues 453–473 (GWVVLHVFGMMYVFVALAIVC). Over 474–497 (DEYFVPALGVITDKLQISEDVAGA) the chain is Cytoplasmic. The Alpha-1 repeat unit spans residues 494–534 (VAGATFMAAGGSAPELFTSLIGVFISHSNVGIGTIVGSAVF). The helical transmembrane segment at 498 to 518 (TFMAAGGSAPELFTSLIGVFI) threads the bilayer. The Extracellular segment spans residues 519–522 (SHSN). A helical membrane pass occupies residues 523–543 (VGIGTIVGSAVFNILFVIGTC). The Cytoplasmic segment spans residues 544–563 (SLFSREILNLTWWPLFRDVS). A helical membrane pass occupies residues 564 to 584 (FYILDLIMLILFFLDSLIAWW). Glutamate 585 is a topological domain (extracellular). The chain crosses the membrane as a helical span at residues 586-606 (SLLLLLAYAFYVFTMKWNKHI). Over 607–907 (EVWVKEQLSR…SLDWPETRQK (301 aa)) the chain is Cytoplasmic. Residue serine 658 is modified to Phosphoserine. A disordered region spans residues 690-901 (EKEEESLNQG…GNEEPLSLDW (212 aa)). Threonine 724 carries the post-translational modification Phosphothreonine. Residues 757–769 (PGEEGETAGEGET) show a composition bias toward acidic residues. Basic and acidic residues-rich tracts occupy residues 813–825 (EIHA…KGNE) and 835–849 (AENH…KGVE). Residues 857-892 (GDSEEEEEEEEEQEEEEEEEEQEEEEEEEEEEEEKG) are compositionally biased toward acidic residues. A helical membrane pass occupies residues 908-928 (QAIYLFLLPIVFPLWLTVPDV). At 929 to 935 (RRQESRK) the chain is on the extracellular side. A helical transmembrane segment spans residues 936–956 (FFVFTFLGSIMWIAMFSYLMV). Residues 957 to 971 (WWAHQVGETIGISEE) lie on the Cytoplasmic side of the membrane. The chain crosses the membrane as a helical span at residues 972 to 992 (IMGLTILAAGTSIPDLITSVI). The Alpha-2 repeat unit spans residues 979-1010 (AAGTSIPDLITSVIVARKGLGDMAVSSSVGSN). Residues 993 to 1010 (VARKGLGDMAVSSSVGSN) lie on the Extracellular side of the membrane. A helical membrane pass occupies residues 1011 to 1031 (IFDITVGLPVPWLLFSLINGL). Residues 1032–1039 (QPVPVSSN) lie on the Cytoplasmic side of the membrane. Residues 1040 to 1060 (GLFCAIVLLFLMLLFVISSIA) traverse the membrane as a helical segment. The Extracellular portion of the chain corresponds to 1061-1068 (SCKWRMNK). The helical transmembrane segment at 1069-1089 (ILGFTMFLLYFVFLIISVMLE) threads the bilayer. Over 1090 to 1099 (DRIISCPVSV) the chain is Cytoplasmic.

The protein belongs to the Ca(2+):cation antiporter (CaCA) (TC 2.A.19) family. SLC24A subfamily. In terms of processing, the uncleaved signal sequence is required for efficient membrane targeting and proper membrane integration. In terms of tissue distribution, expressed in the retina, particularly in the inner segment, outer and inner nuclear layers, and ganglion cell layer.

It is found in the cell membrane. The catalysed reaction is Ca(2+)(out) + K(+)(out) + 4 Na(+)(in) = Ca(2+)(in) + K(+)(in) + 4 Na(+)(out). Functionally, calcium, potassium:sodium antiporter that transports 1 Ca(2+) and 1 K(+) in exchange for 4 Na(+). Critical component of the visual transduction cascade, controlling the calcium concentration of outer segments during light and darkness. Light causes a rapid lowering of cytosolic free calcium in the outer segment of both retinal rod and cone photoreceptors and the light-induced lowering of calcium is caused by extrusion via this protein which plays a key role in the process of light adaptation. This is Sodium/potassium/calcium exchanger 1 from Homo sapiens (Human).